A 66-amino-acid chain; its full sequence is Cold shock-like protein CspD (66 aa).

A CSD domain is found at 4 to 63 (GKVKWFNGEKGFGFIEVEGGEDVFVHFSAIQGDGFKTLEEGQEVSFEIVDGNRGPQAANV).

In terms of assembly, homodimer.

It is found in the cytoplasm. The chain is Cold shock-like protein CspD (cspD) from Bacillus cereus.